The primary structure comprises 159 residues: Ribosomal RNA large subunit methyltransferase H (159 aa).

Residues L76, G108, and 127–132 (FSKMTF) each bind S-adenosyl-L-methionine.

This sequence belongs to the RNA methyltransferase RlmH family. As to quaternary structure, homodimer.

The protein localises to the cytoplasm. It carries out the reaction pseudouridine(1915) in 23S rRNA + S-adenosyl-L-methionine = N(3)-methylpseudouridine(1915) in 23S rRNA + S-adenosyl-L-homocysteine + H(+). Functionally, specifically methylates the pseudouridine at position 1915 (m3Psi1915) in 23S rRNA. In Clostridium botulinum (strain ATCC 19397 / Type A), this protein is Ribosomal RNA large subunit methyltransferase H.